The following is a 332-amino-acid chain: Aspartate carbamoyltransferase catalytic subunit (332 aa).

Positions methionine 1–aspartate 20 are disordered. Residues arginine 72 and threonine 73 each contribute to the carbamoyl phosphate site. Lysine 100 contributes to the L-aspartate binding site. Carbamoyl phosphate contacts are provided by arginine 122, histidine 152, and glutamine 155. L-aspartate-binding residues include arginine 186 and arginine 241. 2 residues coordinate carbamoyl phosphate: glycine 282 and proline 283.

The protein belongs to the aspartate/ornithine carbamoyltransferase superfamily. ATCase family. In terms of assembly, heterododecamer (2C3:3R2) of six catalytic PyrB chains organized as two trimers (C3), and six regulatory PyrI chains organized as three dimers (R2).

The catalysed reaction is carbamoyl phosphate + L-aspartate = N-carbamoyl-L-aspartate + phosphate + H(+). The protein operates within pyrimidine metabolism; UMP biosynthesis via de novo pathway; (S)-dihydroorotate from bicarbonate: step 2/3. Its function is as follows. Catalyzes the condensation of carbamoyl phosphate and aspartate to form carbamoyl aspartate and inorganic phosphate, the committed step in the de novo pyrimidine nucleotide biosynthesis pathway. This chain is Aspartate carbamoyltransferase catalytic subunit, found in Psychrobacter sp. (strain TAD1).